The sequence spans 197 residues: Imidazoleglycerol-phosphate dehydratase (197 aa).

Belongs to the imidazoleglycerol-phosphate dehydratase family.

The protein resides in the cytoplasm. The catalysed reaction is D-erythro-1-(imidazol-4-yl)glycerol 3-phosphate = 3-(imidazol-4-yl)-2-oxopropyl phosphate + H2O. It functions in the pathway amino-acid biosynthesis; L-histidine biosynthesis; L-histidine from 5-phospho-alpha-D-ribose 1-diphosphate: step 6/9. This chain is Imidazoleglycerol-phosphate dehydratase, found in Syntrophomonas wolfei subsp. wolfei (strain DSM 2245B / Goettingen).